A 109-amino-acid chain; its full sequence is Mitochondrial pyruvate carrier 2 (109 aa).

3 helical membrane-spanning segments follow: residues 19 to 35 (IHFW…IANI), 51 to 67 (IAVT…STII), and 74 to 90 (LFSV…YQLT).

Belongs to the mitochondrial pyruvate carrier (MPC) (TC 2.A.105) family.

It localises to the mitochondrion inner membrane. Functionally, mediates the uptake of pyruvate into mitochondria. In Arabidopsis thaliana (Mouse-ear cress), this protein is Mitochondrial pyruvate carrier 2.